The sequence spans 369 residues: Peptide chain release factor 2 (369 aa).

Gln251 carries the post-translational modification N5-methylglutamine.

It belongs to the prokaryotic/mitochondrial release factor family. Methylated by PrmC. Methylation increases the termination efficiency of RF2.

Its subcellular location is the cytoplasm. Functionally, peptide chain release factor 2 directs the termination of translation in response to the peptide chain termination codons UGA and UAA. This is Peptide chain release factor 2 (prfB) from Chlamydia muridarum (strain MoPn / Nigg).